A 125-amino-acid chain; its full sequence is Ribosome-binding factor A (125 aa).

Belongs to the RbfA family. In terms of assembly, monomer. Binds 30S ribosomal subunits, but not 50S ribosomal subunits or 70S ribosomes.

The protein resides in the cytoplasm. In terms of biological role, one of several proteins that assist in the late maturation steps of the functional core of the 30S ribosomal subunit. Associates with free 30S ribosomal subunits (but not with 30S subunits that are part of 70S ribosomes or polysomes). Required for efficient processing of 16S rRNA. May interact with the 5'-terminal helix region of 16S rRNA. The chain is Ribosome-binding factor A from Wigglesworthia glossinidia brevipalpis.